The chain runs to 332 residues: 2,3-diketo-L-gulonate reductase (332 aa).

H44 (proton donor) is an active-site residue. NAD(+) contacts are provided by residues 168-174, 224-225, and 304-306; these read ITMVDMS, WK, and GHE.

Belongs to the LDH2/MDH2 oxidoreductase family. DlgD subfamily. Homodimer.

It localises to the cytoplasm. It carries out the reaction 3-dehydro-L-gulonate + NAD(+) = 2,3-dioxo-L-gulonate + NADH + H(+). The enzyme catalyses 3-dehydro-L-gulonate + NADP(+) = 2,3-dioxo-L-gulonate + NADPH + H(+). Its function is as follows. Catalyzes the reduction of 2,3-diketo-L-gulonate in the presence of NADH, to form 3-keto-L-gulonate. The protein is 2,3-diketo-L-gulonate reductase of Escherichia coli (strain K12 / MC4100 / BW2952).